The primary structure comprises 242 residues: MGDQPRPPVPPAPGSNPLPMGSTPPVLPGRTPNPNANVANQVGDPFRVLTPEELAAPISAASNKVATREQILGIVADLNALGFVGDPALGLFDLAFHCYDIGSSPSAQPVGPSPFGCSRMQVAAVVRNHCTLRQLCMFYAPSVWNKAVRDNRPPGNWSNLQFTPETKFAAFDFFDGVLNPASQEVPLWRQPTPQEIYASATHKDVATYRAASKAHDRISNSTLLTKGASRSTPPALLPGPDA.

A compositionally biased stretch (pro residues) spans 1-16 (MGDQPRPPVPPAPGSN). Disordered stretches follow at residues 1–41 (MGDQ…VANQ) and 219–242 (SNST…GPDA). Positions 219-232 (SNSTLLTKGASRST) are enriched in polar residues.

This sequence belongs to the potexvirus capsid protein family.

The protein resides in the virion. Functionally, required for genome encapsidation. Forms ribonucleoprotein complexes along with TGB1 helicase and viral RNA. This Strawberry mild yellow edge-associated virus (SMYEaV) protein is Coat protein.